Consider the following 710-residue polypeptide: MMIGKLWRSVGTVGKFDGRYDGVRTMVGKASNRAGVHVTDTVLFEETSFEFSPSLTPELNEFPMPSLDVITPQAYLTPLGSQSINHAKFLQIPWRQFVFTKPLGLSKSTKLDEAVTLIENSSSSPSNLSTPEAYTDLLHACISAKSLHHGIKICSLILNNPSLRHNPKLLSKLITLFSVCRRLDLARKIFDDVTDSSLLTEKVWAAMAIGYSRNGSPRDALIVYVDMLCSFIEPGNFSISVALKACVDLKDLRVGRGIHAQIVKRKEKVDQVVYNVLLKLYMESGLFDDARKVFDGMSERNVVTWNSLISVLSKKVRVHEMFNLFRKMQEEMIGFSWATLTTILPACSRVAALLTGKEIHAQILKSKEKPDVPLLNSLMDMYGKCGEVEYSRRVFDVMLTKDLASWNIMLNCYAINGNIEEVINLFEWMIESGVAPDGITFVALLSGCSDTGLTEYGLSLFERMKTEFRVSPALEHYACLVDILGRAGKIKEAVKVIETMPFKPSASIWGSLLNSCRLHGNVSVGEIAAKELFVLEPHNPGNYVMVSNIYADAKMWDNVDKIREMMKQRGVKKEAGCSWVQVKDKIQIFVAGGGYEFRNSDEYKKVWTELQEAIEKSGYSPNTSVVLHDVDEETKANWVCGHSERLATTYSLIHTGEGVPIRITKNLRVCADCHSWMKIVSQVTRRVIVLRDTKRFHHFVDGICSCKDYW.

PPR repeat units follow at residues 166–196 (NPKL…VTDS), 200–234 (TEKV…FIEP), 235–269 (GNFS…KEKV), 270–304 (DQVV…NVVT), 305–331 (WNSL…MQEE), 336–370 (SWAT…KEKP), 371–401 (DVPL…MLTK), 402–436 (DLAS…GVAP), 437–467 (DGIT…MKTE), and 473–503 (ALEH…MPFK). Residues 508 to 583 (IWGSLLNSCR…EAGCSWVQVK (76 aa)) form a type E motif region. The segment at 584–615 (DKIQIFVAGGGYEFRNSDEYKKVWTELQEAIE) is type E(+) motif. The segment at 616-710 (KSGYSPNTSV…DGICSCKDYW (95 aa)) is type DYW motif.

This sequence belongs to the PPR family. PCMP-H subfamily.

This is Pentatricopeptide repeat-containing protein At3g14330 (PCMP-H57) from Arabidopsis thaliana (Mouse-ear cress).